The sequence spans 264 residues: Endochitinase At2g43590 (264 aa).

The signal sequence occupies residues 1 to 24 (MAFTKISLVLLLCLLGFFSETVKS). A Chitin-binding type-1 domain is found at 25-59 (QNCGCAPNLCCSQFGYCGTDDAYCGVGCRSGPCRG). 4 cysteine pairs are disulfide-bonded: Cys-27/Cys-35, Cys-29/Cys-41, Cys-34/Cys-48, and Cys-52/Cys-57. Positions 66–264 (GSVGSIVTQG…GVDPGPNLSC (199 aa)) are catalytic. Residue Glu-128 is the Proton donor of the active site. Asn-261 is a glycosylation site (N-linked (GlcNAc...) asparagine).

This sequence belongs to the glycosyl hydrolase 19 family. Chitinase class I subfamily.

It carries out the reaction Random endo-hydrolysis of N-acetyl-beta-D-glucosaminide (1-&gt;4)-beta-linkages in chitin and chitodextrins.. The protein is Endochitinase At2g43590 of Arabidopsis thaliana (Mouse-ear cress).